Consider the following 334-residue polypeptide: L-lactate dehydrogenase C chain (334 aa).

NAD(+) contacts are provided by residues 30–58 (GQVG…VEDK) and arginine 100. Substrate is bound by residues arginine 107, asparagine 139, and arginine 170. Asparagine 139 provides a ligand contact to NAD(+). Histidine 194 serves as the catalytic Proton acceptor. Substrate is bound at residue threonine 249.

This sequence belongs to the LDH/MDH superfamily. LDH family. Homotetramer. As to expression, eye and liver.

It localises to the cytoplasm. The enzyme catalyses (S)-lactate + NAD(+) = pyruvate + NADH + H(+). It participates in fermentation; pyruvate fermentation to lactate; (S)-lactate from pyruvate: step 1/1. This is L-lactate dehydrogenase C chain (ldhc) from Fundulus heteroclitus (Killifish).